The primary structure comprises 439 residues: UDP-N-acetylmuramoylalanine--D-glutamate ligase (439 aa).

116 to 122 (GSNGKTT) contributes to the ATP binding site.

It belongs to the MurCDEF family.

Its subcellular location is the cytoplasm. It catalyses the reaction UDP-N-acetyl-alpha-D-muramoyl-L-alanine + D-glutamate + ATP = UDP-N-acetyl-alpha-D-muramoyl-L-alanyl-D-glutamate + ADP + phosphate + H(+). Its pathway is cell wall biogenesis; peptidoglycan biosynthesis. Functionally, cell wall formation. Catalyzes the addition of glutamate to the nucleotide precursor UDP-N-acetylmuramoyl-L-alanine (UMA). In Shewanella oneidensis (strain ATCC 700550 / JCM 31522 / CIP 106686 / LMG 19005 / NCIMB 14063 / MR-1), this protein is UDP-N-acetylmuramoylalanine--D-glutamate ligase.